Reading from the N-terminus, the 449-residue chain is Glucose-6-phosphate isomerase (449 aa).

The Proton donor role is filled by Glu291. Active-site residues include His312 and Lys426.

The protein belongs to the GPI family.

It is found in the cytoplasm. It catalyses the reaction alpha-D-glucose 6-phosphate = beta-D-fructose 6-phosphate. It participates in carbohydrate biosynthesis; gluconeogenesis. It functions in the pathway carbohydrate degradation; glycolysis; D-glyceraldehyde 3-phosphate and glycerone phosphate from D-glucose: step 2/4. Its function is as follows. Catalyzes the reversible isomerization of glucose-6-phosphate to fructose-6-phosphate. In Streptococcus gordonii (strain Challis / ATCC 35105 / BCRC 15272 / CH1 / DL1 / V288), this protein is Glucose-6-phosphate isomerase.